Reading from the N-terminus, the 114-residue chain is MIKLRLKRFGKKKEASFRIVACNSTSRRDGRPLQELGFYNPRTKETRLDTEALRIRLTQGAQPTDVVRTLLEKGGLLEKKVRPSIAIGKAKLEKEKIAKAKSKEAESDSKEAES.

The protein belongs to the bacterial ribosomal protein bS16 family.

This is Small ribosomal subunit protein bS16 from Prochlorococcus marinus subsp. pastoris (strain CCMP1986 / NIES-2087 / MED4).